Consider the following 356-residue polypeptide: NF-kappa-B inhibitor beta (356 aa).

2 positions are modified to phosphoserine; by RPS6KA1: Ser-19 and Ser-23. ANK repeat units follow at residues 57-86 (DGDTALHLAVIHQHEPFLDFLLGFSAGTEY), 93-122 (LGQTALHLAAILGETSTVEKLYAAGAGLCV), and 126-155 (RGHTALHLACRVGAHACARALLQPRPRRPR). The segment at 149 to 193 (PRPRRPREAPDTYLAQGPDRTPDTNHTPVALYPDSDLEKEEEESE) is disordered. Position 183 is a phosphoserine (Ser-183). Residues 183–193 (SDLEKEEEESE) show a composition bias toward acidic residues. ANK repeat units lie at residues 206–235 (EGHTPLHVAVIHKDVEMVRLLRDAGADLDK), 240–269 (CGRSPLHLAVEAQAADVLELLLRAGANPAA), and 273–302 (GGRTPLGSAMLRPNPILARLLRAHGAPEPE). The segment at 298–356 (APEPEGEDEKSGPCSSSSDSDSGDEGDEYDDIVVHSSRSQTRLPPTPASKPLPDDPRPV) is disordered. Ser-313 and Ser-315 each carry phosphoserine; by CK2. Over residues 318–328 (DSGDEGDEYDD) the composition is skewed to acidic residues.

This sequence belongs to the NF-kappa-B inhibitor family. Interacts with THRB (via ligand-binding domain). Interacts with RELA and REL. Interacts with COMMD1. Interacts with inhibitor kappa B-interacting Ras-like NKIRAS1 and NKIRAS2. In terms of processing, phosphorylated by RPS6KA1; followed by degradation. Interaction with NKIRAS1 and NKIRAS2 probably prevents phosphorylation. In terms of tissue distribution, expressed in all tissues examined.

Its subcellular location is the cytoplasm. It localises to the nucleus. Inhibits NF-kappa-B by complexing with and trapping it in the cytoplasm. However, the unphosphorylated form resynthesized after cell stimulation is able to bind NF-kappa-B allowing its transport to the nucleus and protecting it to further NFKBIA-dependent inactivation. Association with inhibitor kappa B-interacting NKIRAS1 and NKIRAS2 prevent its phosphorylation rendering it more resistant to degradation, explaining its slower degradation. The protein is NF-kappa-B inhibitor beta (NFKBIB) of Homo sapiens (Human).